Here is a 266-residue protein sequence, read N- to C-terminus: Glucosamine-6-phosphate deaminase (266 aa).

D72 functions as the Proton acceptor; for enolization step in the catalytic mechanism. D141 acts as the For ring-opening step in catalysis. Catalysis depends on H143, which acts as the Proton acceptor; for ring-opening step. E148 functions as the For ring-opening step in the catalytic mechanism.

Belongs to the glucosamine/galactosamine-6-phosphate isomerase family. NagB subfamily. Homohexamer.

It carries out the reaction alpha-D-glucosamine 6-phosphate + H2O = beta-D-fructose 6-phosphate + NH4(+). It participates in amino-sugar metabolism; N-acetylneuraminate degradation; D-fructose 6-phosphate from N-acetylneuraminate: step 5/5. Allosterically activated by N-acetylglucosamine 6-phosphate (GlcNAc6P). Its function is as follows. Catalyzes the reversible isomerization-deamination of glucosamine 6-phosphate (GlcN6P) to form fructose 6-phosphate (Fru6P) and ammonium ion. This Yersinia pseudotuberculosis serotype O:1b (strain IP 31758) protein is Glucosamine-6-phosphate deaminase.